The sequence spans 625 residues: 1-deoxy-D-xylulose-5-phosphate synthase (625 aa).

Thiamine diphosphate is bound by residues His-74 and 115 to 117 (GHS). Residue Asp-146 coordinates Mg(2+). Thiamine diphosphate-binding positions include 147–148 (GA), Asn-175, Tyr-286, and Glu-367. Asn-175 contacts Mg(2+).

It belongs to the transketolase family. DXPS subfamily. Homodimer. It depends on Mg(2+) as a cofactor. Thiamine diphosphate is required as a cofactor.

The catalysed reaction is D-glyceraldehyde 3-phosphate + pyruvate + H(+) = 1-deoxy-D-xylulose 5-phosphate + CO2. It participates in metabolic intermediate biosynthesis; 1-deoxy-D-xylulose 5-phosphate biosynthesis; 1-deoxy-D-xylulose 5-phosphate from D-glyceraldehyde 3-phosphate and pyruvate: step 1/1. Catalyzes the acyloin condensation reaction between C atoms 2 and 3 of pyruvate and glyceraldehyde 3-phosphate to yield 1-deoxy-D-xylulose-5-phosphate (DXP). This is 1-deoxy-D-xylulose-5-phosphate synthase from Lachnoclostridium phytofermentans (strain ATCC 700394 / DSM 18823 / ISDg) (Clostridium phytofermentans).